Here is a 225-residue protein sequence, read N- to C-terminus: Methyl-CpG-binding domain-containing protein 6 (225 aa).

The tract at residues 25-92 (GDGTLDSSAK…PGWRVEDKIR (68 aa)) is disordered. The MBD domain occupies 71–146 (RKRAAPGDNW…ENTYFNPDHF (76 aa)).

As to quaternary structure, homodimer and heterodimer with MBD5. Interacts with DDM1 via its MBD domain. Interacts with NTF2, RPS2C, HDA6 and AGO4. In terms of tissue distribution, expressed in rosette leaves, buds, flowers, stems, mature seeds and roots.

It is found in the nucleus. It localises to the chromosome. The protein localises to the nucleolus. In terms of biological role, transcriptional regulator that binds CpG, CpNpN and CpNpG (N is A, T, or C) islands in promoters regardless the DNA methylation status. Plays probably a role in gene silencing. May associate with histone deacetylase proteins (HDAC). Required for nucleolar dominance that consist in the silencing of rRNA genes inherited from one progenitor in genetic hybrids. Recruited to rRNA genes in a DRM2-dependent manner. Maintains gene silencing by interacting with RNA binding proteins (e.g. NTF2, RPS2C, HDA6 and AGO4) and by regulating DNA methylation status. This Arabidopsis thaliana (Mouse-ear cress) protein is Methyl-CpG-binding domain-containing protein 6.